A 261-amino-acid chain; its full sequence is Small ribosomal subunit protein mS23 (261 aa).

The disordered stretch occupies residues 233–261 (RASSPSASWTNETEEEQKPIDQDVEEIQL).

Belongs to the mitochondrion-specific ribosomal protein mS23 family. As to quaternary structure, component of the mitochondrial small ribosomal subunit.

The protein resides in the mitochondrion. This is Small ribosomal subunit protein mS23 (RSM25) from Kluyveromyces lactis (strain ATCC 8585 / CBS 2359 / DSM 70799 / NBRC 1267 / NRRL Y-1140 / WM37) (Yeast).